Reading from the N-terminus, the 455-residue chain is Keratin, type I cuticular Ha5 (455 aa).

Positions 1–97 (MASKCLKASF…FGEGILTGNE (97 aa)) are head. An IF rod domain is found at 97-408 (EKETMQSLND…GLLESEDSKL (312 aa)). A coil 1A region spans residues 98-132 (KETMQSLNDRLASYLEKVRQLEQENASLESRIREW). Positions 133–143 (CEQQVPYMCPD) are linker 1. The coil 1B stretch occupies residues 144–244 (YQSYFRTMEE…HEEEVNSLRC (101 aa)). Residues 245-260 (QLGDRLNVEVDAAPPV) form a linker 12 region. The interval 261–404 (DLNRVLDEMR…NTYRGLLESE (144 aa)) is coil 2. The tract at residues 405-455 (DSKLPCNPCAPDYSSSKSCLPCLPAVSCSTGAARTTCSPRPVCVPCPGGRF) is tail.

Belongs to the intermediate filament family.

This is Keratin, type I cuticular Ha5 from Mus musculus (Mouse).